A 105-amino-acid polypeptide reads, in one-letter code: POU domain, class 3, transcription factor 3 (105 aa).

One can recognise a POU-specific domain in the interval 1–49; sequence QADVGLALGTLYGNVFSQTTICRFEALQLSFKNMCKLKPLLNKWLEEAD. Positions 67–105 form a DNA-binding region, homeobox; it reads KRKKRTSIEVSVKGALESHFLKCPKPAAQEITTLADSLQ.

It belongs to the POU transcription factor family. Class-3 subfamily.

Its subcellular location is the nucleus. The sequence is that of POU domain, class 3, transcription factor 3 (pou3f3) from Xenopus laevis (African clawed frog).